The chain runs to 957 residues: Protein translocase subunit SecA (957 aa).

Residues Gln86, 104 to 108, and Asp494 each bind ATP; that span reads GEGKT. A compositionally biased stretch (low complexity) spans 929–947; it reads SRPAPAPTAAASPDPSSAS. Residues 929-957 are disordered; the sequence is SRPAPAPTAAASPDPSSASGVVEADFTEE.

Belongs to the SecA family. As to quaternary structure, monomer and homodimer. Part of the essential Sec protein translocation apparatus which comprises SecA, SecYEG and auxiliary proteins SecDF. Other proteins may also be involved.

It is found in the cell inner membrane. It localises to the cellular thylakoid membrane. The protein resides in the cytoplasm. It carries out the reaction ATP + H2O + cellular proteinSide 1 = ADP + phosphate + cellular proteinSide 2.. In terms of biological role, part of the Sec protein translocase complex. Interacts with the SecYEG preprotein conducting channel. Has a central role in coupling the hydrolysis of ATP to the transfer of proteins into and across the cell membrane, serving as an ATP-driven molecular motor driving the stepwise translocation of polypeptide chains across the membrane. Probably participates in protein translocation into and across both the cytoplasmic and thylakoid membranes in cyanobacterial cells. The sequence is that of Protein translocase subunit SecA from Synechococcus sp. (strain JA-2-3B'a(2-13)) (Cyanobacteria bacterium Yellowstone B-Prime).